The following is a 172-amino-acid chain: Dehydratase cfoI (172 aa).

Catalysis depends on residues histidine 86 and histidine 111.

It belongs to the scytalone dehydratase family. Homotrimer. Each subunit contains an active site, located in the central part of the hydrophobic core of the monomer, which functions independently.

The protein operates within secondary metabolite biosynthesis; flavonoid biosynthesis. Cytochrome P450 monooxygenase; part of the gene cluster that mediates the biosynthesis of chlorflavonin, a fungal flavonoid with acetolactate synthase inhibitory activity. Within the pathway, cfoI is responsible for the hydroxylation of the flavonoid skeleton at position C3 with cfoF. The pathway begins with the PKS-NRPS hybrid synthetase cfoA that uses benzoic acid or p-hydroxybenzoic acid as a starter unit with four rounds of chain elongation using malonyl-CoA to form the chalcone skeleton. Then, a new type of chalcone isomerase, cfoK, catalyzes the conversion of the chalcone into a flavanone by a histidine-mediated oxa-Michael addition mechanism. The desaturation of flavanone to flavone is catalyzed by a new type of flavone synthase, the flavin mononucleotide (FMN)-dependent oxidoreductase cfoJ. Monooxygenases cfoF, cfoG, and P450 cfoH are responsible for the hydroxylation of the flavonoid skeleton at sites C3, C8, and C2', respectively. Like cfoF, the dehydratase cfoI plays also a role in the hydroxylation of position C3. Methyltransferases cfoB, cfoC, and cfoD then catalyze the methylation of C7-OH, C8-OH, and C3-OH, respectively. Finally, the monooxygenase cfoE is responsible for the chlorination of flavonoid at position C3'. The chain is Dehydratase cfoI from Aspergillus candidus.